The chain runs to 224 residues: Processed variable antigen (224 aa).

Tandem repeats lie at residues 1 to 6, 7 to 12, 13 to 18, 19 to 24, 25 to 30, 31 to 36, 37 to 42, 43 to 48, 49 to 54, 55 to 60, 61 to 66, 67 to 72, 73 to 78, 79 to 84, 85 to 90, 91 to 96, and 97 to 102. The segment at 1–102 is 17 X 6 AA tandem repeats of E-T-G-E-S-K; the sequence is ETGESKETGE…GESKETGESK (102 aa). Residues 1–137 are compositionally biased toward basic and acidic residues; that stretch reads ETGESKETGE…TEESKDREGN (137 aa). The interval 1–224 is disordered; it reads ETGESKETGE…KKADNKKKKK (224 aa). The segment covering 144–153 has biased composition (low complexity); that stretch reads ENSENSNVTS. 2 stretches are compositionally biased toward basic and acidic residues: residues 156-173 and 185-217; these read EETKKLAEKEENEGEKLG and EDPKKLTEQEENGTKESSEETKDDKPEENEKKA.

In Plasmodium falciparum, this protein is Processed variable antigen.